Reading from the N-terminus, the 245-residue chain is Short-chain dehydrogenase/reductase pyiH (245 aa).

4 residues coordinate NADP(+): Ile-18, Arg-42, Asp-68, and Asn-95. The active-site Proton donor is Ser-150.

This sequence belongs to the short-chain dehydrogenases/reductases (SDR) family.

It participates in mycotoxin biosynthesis. In terms of biological role, short-chain dehydrogenase/reductase; part of the gene cluster that mediates the biosynthesis of the mycotoxin pyrichalasin H, a tyrosine-derived cytochalasan that inhibits the growth of rice seedlings, but also inhibits lymphocyte capping and actin polymerization and alters cell morphology. Pyrichalasin H is indicated as the responsible agent for the genus-specific pathogenicity of M.grisea toward crabgrass. The first step in the pathway is catalyzed by the O-methyltransferase pyiA which methylates free tyrosine to generate the precursor O-methyltyrosine. The hybrid PKS-NRPS pyiS, assisted by the enoyl reductase pyiC, are responsible for fusion of the O-methyltyrosine precursor and the polyketide backbone. The polyketide synthase module (PKS) of pyiS is responsible for the synthesis of the polyketide backbone and the downstream nonribosomal peptide synthetase (NRPS) amidates the carboxyl end of the polyketide with the O-methyltyrosine precursor. As the NRPS A-domain demonstrates substrate tolerance, pyiS can also use phenylalanine, tyrosine and even para-chlorophenylalanine as amino acid precursor, which leads to the production of novel cytochalasans, including halogenated cytochalasans. Because pyiS lacks a designated enoylreductase (ER) domain, the required activity is provided the enoyl reductase pyiC. Reduction by the hydrolyase pyiE leads to 1,5-dihydropyrrolone, which is substrate for dehydration and intra-molecular Diels-Alder cyclization by the Diels-Alderase pyiF to yield the required isoindolone-fused macrocycle. The tailoring cytochrome P450 monooxygenases piyD and piyG catalyze the hydroxylation at C-18 and C-7, respectivily, whereas the short-chain dehydrogenase/reductase pyiH reduces the carbonyl at C-21 in preparation for the transfer of an acetyl group by the acetyltransferase pyiB. These 3 reactions whose order is not clear yet, lead to the production of O-methylpyrichalasin J, a deacetylated pyrichalasin H. Finally, pyiB to converts O-methylpyrichalasin J into the final product pyrichalasin H via acetylation of C-21. The polypeptide is Short-chain dehydrogenase/reductase pyiH (Pyricularia grisea (Crabgrass-specific blast fungus)).